The following is a 402-amino-acid chain: Speedy protein E5 (402 aa).

Residues 1–89 (MDRTETRFRK…EEPEKELAPE (89 aa)) are disordered. The span at 16-39 (EKITTSRQPQPQNEQSPQRSTSGY) shows a compositional bias: polar residues. A compositionally biased stretch (acidic residues) spans 76–89 (DESAEEPEKELAPE).

The protein belongs to the Speedy/Ringo family.

The polypeptide is Speedy protein E5 (SPDYE5) (Homo sapiens (Human)).